The following is a 359-amino-acid chain: MSQVYNFSAGPAMLPIQVLRQMQDELLEYEDVKASIMEISHRSTDFIAMAQKSEQDLRDLMNIPNHYKVLFLQGGASAQFSMVPINLLHGKTKANYAYTGHWSKKAIVEGSRYCDVNICTNSSDNKYTDIDVFENWDIDPDGAYLHYTPNETIAGLEFDYVPEVDMPLVADMSSSILSREVDVSKYGVIYAGAQKNIGIAGLTVVIVREDLMGSVVANQPILFDYTIQAKNDSMYNTPSTYSWYVASRVFEWLKQQGGLSVIAKINQTKAKTLYDVIDGSNFYSNPVALKYRSWMNVPFLLADENLNGLFVEKAAINNLITLKGHRSVGGMRASIYNAMPQKGINELINFMKVFEKENS.

Arg42 provides a ligand contact to L-glutamate. Pyridoxal 5'-phosphate-binding positions include 76-77 (AS), Trp102, Thr152, Asp171, and Gln194. Lys195 bears the N6-(pyridoxal phosphate)lysine mark. 236 to 237 (NT) is a binding site for pyridoxal 5'-phosphate.

This sequence belongs to the class-V pyridoxal-phosphate-dependent aminotransferase family. SerC subfamily. Homodimer. Pyridoxal 5'-phosphate serves as cofactor.

It localises to the cytoplasm. The catalysed reaction is O-phospho-L-serine + 2-oxoglutarate = 3-phosphooxypyruvate + L-glutamate. It catalyses the reaction 4-(phosphooxy)-L-threonine + 2-oxoglutarate = (R)-3-hydroxy-2-oxo-4-phosphooxybutanoate + L-glutamate. Its pathway is amino-acid biosynthesis; L-serine biosynthesis; L-serine from 3-phospho-D-glycerate: step 2/3. The protein operates within cofactor biosynthesis; pyridoxine 5'-phosphate biosynthesis; pyridoxine 5'-phosphate from D-erythrose 4-phosphate: step 3/5. Its function is as follows. Catalyzes the reversible conversion of 3-phosphohydroxypyruvate to phosphoserine and of 3-hydroxy-2-oxo-4-phosphonooxybutanoate to phosphohydroxythreonine. This chain is Phosphoserine aminotransferase, found in Vesicomyosocius okutanii subsp. Calyptogena okutanii (strain HA).